Consider the following 390-residue polypeptide: Putative gustatory receptor 59d (390 aa).

At 1–38 the chain is on the cytoplasmic side; it reads MADLLKLCLRIAYAYGRLTGVINFKIDLKTGQALVTRG. A helical membrane pass occupies residues 39–59; it reads ATLISVSTHLLIFALLLYQTM. The Extracellular portion of the chain corresponds to 60–75; it reads RKSVVNVMWKYANSLH. A helical membrane pass occupies residues 76-96; the sequence is EYVFLVIAGFRVVCVFLELVS. The Cytoplasmic portion of the chain corresponds to 97–128; that stretch reads RWSQRRTFVRLFNSFRRLYQRNPDIIQYCRRS. A helical transmembrane segment spans residues 129-149; it reads IVSKFFCVTMTETLHIIVTLA. At 150–156 the chain is on the extracellular side; the sequence is MMRNRLS. A helical transmembrane segment spans residues 157–177; that stretch reads IALALRIWAVLSLTAIINVII. Residues 178 to 252 are Cytoplasmic-facing; it reads TQYYVATACV…NLSTAYEGEV (75 aa). The helical transmembrane segment at 253-273 threads the bilayer; it reads VCLVITYYLNMLGTSYLLFSI. At 274–283 the chain is on the extracellular side; sequence SKYGNFGNNL. Residues 284-304 traverse the membrane as a helical segment; sequence LVIITLCGIVYFVFYVVDCWI. Residues 305–366 are Cytoplasmic-facing; the sequence is NAFNVFYLLD…MYGLFEFGRG (62 aa). Residues 367-383 form a helical membrane-spanning segment; that stretch reads TSFAVFNSLLTHSLLLI. Residues 384 to 390 lie on the Extracellular side of the membrane; it reads QYDVQNF.

The protein belongs to the insect chemoreceptor superfamily. Gustatory receptor (GR) family. Gr22e subfamily. In terms of tissue distribution, expressed in the adult labellar chemosensory neurons. In larvae, is expressed in neurons of the terminal external chemosensory organ as well as in the dorsal pharyngeal sense organ.

Its subcellular location is the cell membrane. Its function is as follows. Probable gustatory receptor which mediates acceptance or avoidance behavior, depending on its substrates. The polypeptide is Putative gustatory receptor 59d (Gr59d) (Drosophila melanogaster (Fruit fly)).